Here is a 1585-residue protein sequence, read N- to C-terminus: Histone acetyltransferase lsy-12 (1585 aa).

Disordered stretches follow at residues 1–37 (MGKK…ARRE) and 279–491 (GPQH…DDPV). The span at 23–37 (PKDRTARPTAAARRE) shows a compositional bias: basic and acidic residues. Positions 279-296 (GPQHENVTVSENVLSTES) are enriched in polar residues. The span at 302 to 312 (TETKRLHDSSR) shows a compositional bias: basic and acidic residues. Composition is skewed to polar residues over residues 355–364 (LLSNPHSTPV) and 411–426 (SRLS…SNDL). Low complexity predominate over residues 431 to 440 (SAPSSSSAAS). Basic residues predominate over residues 453–469 (QQRRKGNQSAARSRKIK). Positions 477–491 (QEDEPMELDSDDDPV) are enriched in acidic residues. An MYST-type HAT domain is found at 544-830 (EQARLPERIH…YDPECLDWVP (287 aa)). The C2HC MYST-type zinc-finger motif lies at 577–602 (LFICEFCFFYARSDEIMQNHAKKCML). At lysine 644 the chain carries N6-acetyllysine; by autocatalysis. 685–689 (SCIMT) is a binding site for acetyl-CoA. Glutamate 720 acts as the Proton donor/acceptor in catalysis. The acetyl-CoA site is built by serine 724 and lysine 815. Basic and acidic residues-rich tracts occupy residues 844-855 (SKEEIEQDEQRR) and 947-956 (VLDKSNIREE). 4 disordered regions span residues 844–903 (SKEE…LKHE), 927–1262 (EENK…IGKS), 1286–1373 (ESTA…ASNH), and 1431–1507 (HHQF…VHPQ). Positions 977–999 (NKCNNTESEPNPSGRKTSATSSG) are enriched in polar residues. Positions 1011–1022 (TEEEEEDDDPTD) are enriched in acidic residues. A compositionally biased stretch (basic and acidic residues) spans 1029-1046 (DDEKPFETSVNKEKNEKS). The segment covering 1047-1060 (RRGKKVSKKRRSVA) has biased composition (basic residues). Basic and acidic residues-rich tracts occupy residues 1070–1081 (VRDRDEPKKAEN) and 1135–1151 (DIPK…AYDR). Residues 1164–1173 (PTPDSYHSSP) show a composition bias toward low complexity. Positions 1185-1194 (LMQAQQNIYQ) are enriched in polar residues. A compositionally biased stretch (basic and acidic residues) spans 1196-1207 (NDCHFAENDSKP). Polar residues-rich tracts occupy residues 1298-1317 (AGPS…NTTP) and 1324-1333 (HPNSQQQATP). The span at 1482 to 1493 (QHQQQQPQQPQQ) shows a compositional bias: low complexity.

It belongs to the MYST (SAS/MOZ) family.

It catalyses the reaction L-lysyl-[protein] + acetyl-CoA = N(6)-acetyl-L-lysyl-[protein] + CoA + H(+). Probable histone acetyltransferase. Required to initiate and then maintain lateralized gene expression in the ASE sensory neurons. Involved in determining cell fate in the ASE neurons. The sequence is that of Histone acetyltransferase lsy-12 from Caenorhabditis elegans.